A 55-amino-acid chain; its full sequence is Eclosion hormone (55 aa).

This sequence belongs to the insect eclosion hormone family.

It is found in the secreted. Neuropeptide that triggers the performance of ecdysis behaviors at the end of a molt. It triggers adult behavior patterns: larval, pupal and adult ecdysis, and plasticization during the molt. The sequence is that of Eclosion hormone from Romalea microptera (Eastern lubber grasshopper).